Here is a 244-residue protein sequence, read N- to C-terminus: NAD(P)H-quinone oxidoreductase subunit K (244 aa).

The [4Fe-4S] cluster site is built by Cys-60, Cys-61, Cys-125, and Cys-156.

Belongs to the complex I 20 kDa subunit family. As to quaternary structure, NDH-1 can be composed of about 15 different subunits; different subcomplexes with different compositions have been identified which probably have different functions. The cofactor is [4Fe-4S] cluster.

Its subcellular location is the cellular thylakoid membrane. The catalysed reaction is a plastoquinone + NADH + (n+1) H(+)(in) = a plastoquinol + NAD(+) + n H(+)(out). It catalyses the reaction a plastoquinone + NADPH + (n+1) H(+)(in) = a plastoquinol + NADP(+) + n H(+)(out). In terms of biological role, NDH-1 shuttles electrons from an unknown electron donor, via FMN and iron-sulfur (Fe-S) centers, to quinones in the respiratory and/or the photosynthetic chain. The immediate electron acceptor for the enzyme in this species is believed to be plastoquinone. Couples the redox reaction to proton translocation, and thus conserves the redox energy in a proton gradient. Cyanobacterial NDH-1 also plays a role in inorganic carbon-concentration. This chain is NAD(P)H-quinone oxidoreductase subunit K, found in Synechococcus sp. (strain CC9902).